Here is a 673-residue protein sequence, read N- to C-terminus: UvrABC system protein B (673 aa).

Residues 26-183 (EGLEDGLAHQ…RRLAELQYAR (158 aa)) form the Helicase ATP-binding domain. 39–46 (GVTGSGKT) contacts ATP. Residues 92–115 (YYDYYQPEAYVPSSDTFIEKDASV) carry the Beta-hairpin motif. A Helicase C-terminal domain is found at 431–597 (QVDDLLSEIR…GLNKKVVDIL (167 aa)). Positions 608 to 627 (AKGRGKSRPIVEPDNVPMDM) are disordered. Residues 633 to 668 (QQKIHELEGLMMQHAQNLEFEEAAQIRDQLHQLRDL) enclose the UVR domain.

Belongs to the UvrB family. As to quaternary structure, forms a heterotetramer with UvrA during the search for lesions. Interacts with UvrC in an incision complex.

It localises to the cytoplasm. The UvrABC repair system catalyzes the recognition and processing of DNA lesions. A damage recognition complex composed of 2 UvrA and 2 UvrB subunits scans DNA for abnormalities. Upon binding of the UvrA(2)B(2) complex to a putative damaged site, the DNA wraps around one UvrB monomer. DNA wrap is dependent on ATP binding by UvrB and probably causes local melting of the DNA helix, facilitating insertion of UvrB beta-hairpin between the DNA strands. Then UvrB probes one DNA strand for the presence of a lesion. If a lesion is found the UvrA subunits dissociate and the UvrB-DNA preincision complex is formed. This complex is subsequently bound by UvrC and the second UvrB is released. If no lesion is found, the DNA wraps around the other UvrB subunit that will check the other stand for damage. The sequence is that of UvrABC system protein B from Escherichia coli O7:K1 (strain IAI39 / ExPEC).